The sequence spans 765 residues: Ankyrin repeat and protein kinase domain-containing protein 1 (765 aa).

Positions 22-289 (EGDWRLVASG…DITIETDILL (268 aa)) constitute a Protein kinase domain. ATP is bound by residues 28-36 (VASGGFSQV) and Lys-51. Asp-145 serves as the catalytic Proton acceptor. 12 ANK repeats span residues 361–390 (NKVTPLHFLVAQGSVEQVRLLLAHEVDVDC), 394–423 (SGYTPLLIAAQDQQPDLCALLLAHGADANR), 427–456 (DGWAPLHFAAQNGDDGTARLLLDHGACVDA), 460–489 (EGWTPLHLAAQNNFENVARLLVSRQADPNL), 493–522 (EGKTPLHVAAYFGHVSLVKLLTSQGAELDA), 526–555 (NLRTPLHLAVERGKVRAIQHLLKSGAVPDA), 559–588 (SGYGPLHTAAARGKYLICKMLLRYGASLEL), 592–621 (QGWTPLHLAAYKGHLEIIHLLAESHANMGA), 625–654 (VNWTPLHLAARHGEEAVVSALLQCGADPNA), 658–687 (SGWTPLHLAVQRSTFLSVINLLEHHANVHA), 691–720 (VGWTPAHLAALKGNTAILKVLVEAGAQLDV), and 724–753 (VSCTPLQLALRSRKQGIMSFLEGKEPSVAT).

This sequence belongs to the protein kinase superfamily. TKL Ser/Thr protein kinase family. In terms of tissue distribution, highly expressed in brain and weakly expressed in placenta and spinal cord.

The catalysed reaction is L-seryl-[protein] + ATP = O-phospho-L-seryl-[protein] + ADP + H(+). It catalyses the reaction L-threonyl-[protein] + ATP = O-phospho-L-threonyl-[protein] + ADP + H(+). In Homo sapiens (Human), this protein is Ankyrin repeat and protein kinase domain-containing protein 1 (ANKK1).